Consider the following 418-residue polypeptide: Aspartate aminotransferase 1 (418 aa).

An N6-(pyridoxal phosphate)lysine modification is found at lysine 264.

The protein belongs to the class-I pyridoxal-phosphate-dependent aminotransferase family. In terms of assembly, homodimer. Pyridoxal 5'-phosphate serves as cofactor. Nodules, roots, stems and leaves, in decreasing order of aspartate aminotransferase 1 concentration. Is the predominant aspartate aminotransferase isoenzyme in roots.

The protein resides in the cytoplasm. It catalyses the reaction L-aspartate + 2-oxoglutarate = oxaloacetate + L-glutamate. Important for the metabolism of amino acids and Krebs-cycle related organic acids. In plants, it is involved in nitrogen metabolism and in aspects of carbon and energy metabolism. The polypeptide is Aspartate aminotransferase 1 (AAT-1) (Medicago sativa (Alfalfa)).